We begin with the raw amino-acid sequence, 128 residues long: uncharacterized protein (128 aa).

Positions 95–123 (IIDFATAKRELDRLTEEIATLKGELAQDK) form a coiled coil.

The protein localises to the cellular thylakoid membrane. This is an uncharacterized protein from Synechocystis sp. (strain ATCC 27184 / PCC 6803 / Kazusa).